Here is a 297-residue protein sequence, read N- to C-terminus: Glycerol-3-phosphate dehydrogenase [NAD(P)+] (297 aa).

Residues Trp-11, Arg-33, and Lys-79 each contribute to the NADPH site. Residues Lys-79, Gly-107, and Ser-109 each contribute to the sn-glycerol 3-phosphate site. Residue Ala-111 participates in NADPH binding. Sn-glycerol 3-phosphate is bound by residues Lys-161, Asp-214, Ser-224, Arg-225, and Asn-226. Lys-161 serves as the catalytic Proton acceptor. Arg-225 provides a ligand contact to NADPH. Residues Val-249 and Glu-251 each coordinate NADPH.

It belongs to the NAD-dependent glycerol-3-phosphate dehydrogenase family.

Its subcellular location is the cytoplasm. It catalyses the reaction sn-glycerol 3-phosphate + NAD(+) = dihydroxyacetone phosphate + NADH + H(+). The catalysed reaction is sn-glycerol 3-phosphate + NADP(+) = dihydroxyacetone phosphate + NADPH + H(+). Its pathway is membrane lipid metabolism; glycerophospholipid metabolism. Functionally, catalyzes the reduction of the glycolytic intermediate dihydroxyacetone phosphate (DHAP) to sn-glycerol 3-phosphate (G3P), the key precursor for phospholipid synthesis. This Campylobacter jejuni subsp. jejuni serotype O:23/36 (strain 81-176) protein is Glycerol-3-phosphate dehydrogenase [NAD(P)+].